The primary structure comprises 340 residues: GATA transcription factor 20 (340 aa).

Residues 1-88 (MSHHDGSKPY…MEEDEDAQHH (88 aa)) form a disordered region. A compositionally biased stretch (low complexity) spans 25–47 (ADDAAAHVAPTVDHLAAVAAEAE). Positions 48–60 (AMARFEEEHRALG) are enriched in basic and acidic residues. Positions 61–84 (AEEEYEEEEDELEEEEEEMEEDED) are enriched in acidic residues. The Tify domain occupies 121 to 156 (QPMASNQLTLSFQGEVYVFDSVSPDKVQAVLLLLGG). The CCT domain maps to 182–224 (RVASLMRFREKRKERNFDKKIRYSVRKEVALRMQRNRGQFTSS). The tract at residues 215-253 (QRNRGQFTSSKPKGDEATSELTASDGSPNWGSVEGRPPS) is disordered. Positions 233-244 (SELTASDGSPNW) are enriched in polar residues. The GATA-type zinc finger occupies 257-284 (CHHCGINAKATPMMRRGPDGPRTLCNAC). Over residues 313-325 (DGNGSAAAPTTEQ) the composition is skewed to polar residues. The interval 313 to 340 (DGNGSAAAPTTEQEIPAPATVNGHESST) is disordered.

This sequence belongs to the type IV zinc-finger family. Class C subfamily.

Its subcellular location is the nucleus. Transcriptional activator that specifically binds 5'-GATA-3' or 5'-GAT-3' motifs within gene promoters. The protein is GATA transcription factor 20 of Oryza sativa subsp. japonica (Rice).